A 103-amino-acid chain; its full sequence is Small ribosomal subunit protein uS10 (103 aa).

It belongs to the universal ribosomal protein uS10 family. Part of the 30S ribosomal subunit.

Its function is as follows. Involved in the binding of tRNA to the ribosomes. The chain is Small ribosomal subunit protein uS10 from Pseudomonas savastanoi pv. phaseolicola (strain 1448A / Race 6) (Pseudomonas syringae pv. phaseolicola (strain 1448A / Race 6)).